We begin with the raw amino-acid sequence, 1028 residues long: Contactin-3 (1028 aa).

The first 19 residues, 1–19, serve as a signal peptide directing secretion; the sequence is MMLSWKQLILLSFIGCLAG. Ig-like C2-type domains lie at 26-117, 122-208, 227-313, 318-402, 408-497, and 499-593; these read PVFV…AKLQ, ENFK…ARVL, PKIE…GRLT, PYWV…AELK, PDFS…LVVT, and PTRI…AELI. Disulfide bonds link cysteine 50–cysteine 100, cysteine 144–cysteine 196, cysteine 249–cysteine 297, cysteine 339–cysteine 386, and cysteine 431–cysteine 479. N-linked (GlcNAc...) asparagine glycans are attached at residues asparagine 65 and asparagine 193. Asparagine 377, asparagine 468, asparagine 489, and asparagine 538 each carry an N-linked (GlcNAc...) asparagine glycan. A disulfide bridge links cysteine 521 with cysteine 577. Fibronectin type-III domains lie at 600 to 698, 703 to 800, 805 to 901, and 902 to 998; these read PPEN…TEEA, APSE…SAEE, APSH…TKKT, and PPSQ…TSMD. Residues 684–714 form a disordered region; it reads GEPSLPSEKVRTEEAAPEVAPSEVSGGGGSR. 6 N-linked (GlcNAc...) asparagine glycosylation sites follow: asparagine 765, asparagine 860, asparagine 895, asparagine 913, asparagine 931, and asparagine 956. Serine 1002 is lipidated: GPI-anchor amidated serine. The propeptide at 1003 to 1028 is removed in mature form; that stretch reads TSAISDIHPVSGYISVLLFFIVNALW.

This sequence belongs to the immunoglobulin superfamily. Contactin family. In terms of assembly, interacts with PTPRG. In terms of tissue distribution, specifically expressed in brain. Not expressed in peripheral tissues such as heart, lung, liver, spleen, kidney and skeletal muscle. In brain, it is restricted to subsets of neurons such as Purkinje cells of the cerebellum, granule cells of the dentate gyrus, and neurons in the superficial layers of the cerebral cortex.

It localises to the cell membrane. In terms of biological role, contactins mediate cell surface interactions during nervous system development. Has some neurite outgrowth-promoting activity. This chain is Contactin-3 (Cntn3), found in Rattus norvegicus (Rat).